The chain runs to 257 residues: Triosephosphate isomerase (257 aa).

Substrate is bound at residue 9 to 11; that stretch reads NWK. The active-site Electrophile is the H95. E168 (proton acceptor) is an active-site residue. Residues G174, S213, and 234–235 each bind substrate; that span reads GG.

The protein belongs to the triosephosphate isomerase family. In terms of assembly, homodimer.

The protein resides in the cytoplasm. The catalysed reaction is D-glyceraldehyde 3-phosphate = dihydroxyacetone phosphate. It functions in the pathway carbohydrate biosynthesis; gluconeogenesis. The protein operates within carbohydrate degradation; glycolysis; D-glyceraldehyde 3-phosphate from glycerone phosphate: step 1/1. Its function is as follows. Involved in the gluconeogenesis. Catalyzes stereospecifically the conversion of dihydroxyacetone phosphate (DHAP) to D-glyceraldehyde-3-phosphate (G3P). This Acidithiobacillus ferrooxidans (strain ATCC 23270 / DSM 14882 / CIP 104768 / NCIMB 8455) (Ferrobacillus ferrooxidans (strain ATCC 23270)) protein is Triosephosphate isomerase.